A 475-amino-acid chain; its full sequence is Aspartyl/glutamyl-tRNA(Asn/Gln) amidotransferase subunit B (475 aa).

Belongs to the GatB/GatE family. GatB subfamily. Heterotrimer of A, B and C subunits.

The enzyme catalyses L-glutamyl-tRNA(Gln) + L-glutamine + ATP + H2O = L-glutaminyl-tRNA(Gln) + L-glutamate + ADP + phosphate + H(+). The catalysed reaction is L-aspartyl-tRNA(Asn) + L-glutamine + ATP + H2O = L-asparaginyl-tRNA(Asn) + L-glutamate + ADP + phosphate + 2 H(+). Functionally, allows the formation of correctly charged Asn-tRNA(Asn) or Gln-tRNA(Gln) through the transamidation of misacylated Asp-tRNA(Asn) or Glu-tRNA(Gln) in organisms which lack either or both of asparaginyl-tRNA or glutaminyl-tRNA synthetases. The reaction takes place in the presence of glutamine and ATP through an activated phospho-Asp-tRNA(Asn) or phospho-Glu-tRNA(Gln). The polypeptide is Aspartyl/glutamyl-tRNA(Asn/Gln) amidotransferase subunit B (Pelodictyon phaeoclathratiforme (strain DSM 5477 / BU-1)).